A 599-amino-acid chain; its full sequence is Elongation factor 4 (599 aa).

A tr-type G domain is found at 5 to 187 (NRIRNFSIVA…AIVTRLPAPK (183 aa)). Residues 17–22 (DHGKST) and 134–137 (NKVD) each bind GTP.

This sequence belongs to the TRAFAC class translation factor GTPase superfamily. Classic translation factor GTPase family. LepA subfamily.

It localises to the cell inner membrane. The catalysed reaction is GTP + H2O = GDP + phosphate + H(+). Its function is as follows. Required for accurate and efficient protein synthesis under certain stress conditions. May act as a fidelity factor of the translation reaction, by catalyzing a one-codon backward translocation of tRNAs on improperly translocated ribosomes. Back-translocation proceeds from a post-translocation (POST) complex to a pre-translocation (PRE) complex, thus giving elongation factor G a second chance to translocate the tRNAs correctly. Binds to ribosomes in a GTP-dependent manner. This chain is Elongation factor 4, found in Jannaschia sp. (strain CCS1).